A 782-amino-acid chain; its full sequence is Homeotic protein proboscipedia (782 aa).

Disordered stretches follow at residues 1 to 23, 153 to 195, 251 to 336, 358 to 380, 439 to 493, and 547 to 586; these read MQEVCSSLDTTSMGTQIKSESPL, PQTP…VPEN, MKHK…GISS, SSVSLDEDIEESSPIKVKKKDDG, IATP…QQQP, and YYNYNDTNGTPYLNHQQQHHHHAQHHQQQQHHQNHVADFE. The Antp-type hexapeptide motif lies at 164–169; it reads EYPWMK. The homeobox DNA-binding region spans 198 to 257; sequence PRRLRTAYTNTQLLELEKEFHFNKYLCRPRRIEIAASLDLTERQVKVWFQNRRMKHKRQT. Over residues 308 to 321 the composition is skewed to low complexity; it reads NNNTPSATNNNPSA. Over residues 322-336 the composition is skewed to polar residues; that stretch reads GNLTPNSSLETGISS. A compositionally biased stretch (gly residues) spans 452–463; the sequence is NGSGGGPAGGYF. Over residues 464 to 493 the composition is skewed to low complexity; sequence PGYYPSPKQQQQVQQQQLHPQQQQLPQQQP. A compositionally biased stretch (basic residues) spans 563 to 580; the sequence is QQHHHHAQHHQQQQHHQN.

Belongs to the Antp homeobox family. Proboscipedia subfamily.

It localises to the nucleus. Sequence-specific transcription factor which is part of a developmental regulatory system that provides cells with specific positional identities on the anterior-posterior axis. Controls development of mouthparts, and labial and maxillary palps. In Drosophila melanogaster (Fruit fly), this protein is Homeotic protein proboscipedia (pb).